We begin with the raw amino-acid sequence, 810 residues long: Volume-regulated anion channel subunit LRRC8A (810 aa).

N-acetylmethionine is present on Met1. The Cytoplasmic segment spans residues 1–22 (MIPVTELRYFADTQPAYRILKP). The chain crosses the membrane as a helical span at residues 23–47 (WWDVFTDYISIVMLMIAVFGGTLQV). The Extracellular segment spans residues 48–123 (TQDKMICLPC…YENRLHWFAK (76 aa)). 3 cysteine pairs are disulfide-bonded: Cys54-Cys310, Cys57-Cys65, and Cys113-Cys295. Asn66 and Asn83 each carry an N-linked (GlcNAc...) asparagine glycan. The chain crosses the membrane as a helical span at residues 124–142 (YFPYLVLLHTLIFLACSNF). Residues 143–264 (WFKFPRTSSK…EEGDIVYRLY (122 aa)) lie on the Cytoplasmic side of the membrane. A Phosphothreonine modification is found at Thr200. A Phosphoserine modification is found at Ser202. Phosphothreonine is present on Thr215. Position 217 is a phosphoserine (Ser217). The chain crosses the membrane as a helical span at residues 265–286 (MRQTIIKVIKFFLIICYTVYYV). The Extracellular segment spans residues 287–316 (HNIKFDVDCTVDIESLTGYRTYRCAHPLAT). The chain crosses the membrane as a helical span at residues 317 to 341 (LFKILASFYISLVIFYGLICMYTLW). The Cytoplasmic segment spans residues 342-810 (WMLRRSLKKY…RLWRADKEQA (469 aa)). LRR repeat units lie at residues 399 to 422 (ENKLRQLNLNNEWTLDKLRQRLTK), 423 to 445 (NAQDKLELHLFMLSGIPDTVFDL), 447 to 468 (ELEVLKLELIPDVTIPPSIAQL), 469 to 492 (TGLKELWLYHTAAKIEAPALAFLR), 493 to 515 (ENLRALHIKFTDIKEIPLWIYSL), 518 to 542 (LEELHLTGNLSAENNRYIVIDGLRE), 543 to 565 (LKRLKVLRLKSNLSKLPQVVTDV), 567 to 589 (VHLQKLSINNEGTKLIVLNSLKK), 590 to 613 (MVNLTELELIRCDLERIPHSIFSL), 614 to 637 (HNLQEIDLKDNNLKTIEEIISFQH), 639 to 661 (HRLTCLKLWYNHIAYIPIQIGNL), 662 to 684 (TNLERLYLNRNKIEKIPTQLFYC), 686 to 707 (KLRYLDLSHNNLTLLPADIGLL), 708 to 730 (QNLQNLAVTANRIEALPPELFQC), 732 to 753 (KLRALHLGNNVLQSLPSRVGEL), 754 to 776 (TNLTQIELRGNRLECLPVELGEC), and 778 to 801 (LLKRSGLVVEEDLFSTLPPEVKER). Positions 706–707 (LL) match the Di-leucine motif motif.

It belongs to the LRRC8 family. In terms of assembly, heterohexamer; oligomerizes with other LRRC8 proteins (LRRC8B, LRRC8C, LRRC8D and/or LRRC8E) to form a heterohexamer. Can form homohexamers in vitro, but these have lower conductance than heterohexamers. Detected in a channel complex that contains LRRC8A, LRRC8C and LRRC8E. In vivo, the subunit composition may depend primarily on expression levels, and heterooligomeric channels containing various proportions of the different LRRC8 proteins may coexist. Interact with GRB2. Interacts with NOX4; this interaction prevents the ubiquitin-mediated degradation of LRRC8A. Post-translationally, N-glycosylated.

It is found in the cell membrane. The protein resides in the lysosome membrane. It carries out the reaction chloride(in) = chloride(out). The enzyme catalyses iodide(out) = iodide(in). It catalyses the reaction taurine(out) = taurine(in). The catalysed reaction is L-aspartate(out) = L-aspartate(in). It carries out the reaction L-glutamate(out) = L-glutamate(in). The enzyme catalyses myo-inositol(out) = myo-inositol(in). It catalyses the reaction 2',3'-cGAMP(out) = 2',3'-cGAMP(in). With respect to regulation, inhibited by (4-[(2-butyl-6,7-dichloro-2-cyclopentyl-2,3-dihydro-1-oxo-1H-inden-5-yl)oxy]butanoic acid), which plugs the channel like a cork in a bottle by binding in the extracellular selectivity filter and sterically occluding ion conduction. Lipids may block conduction in closed heterohexameric channels. In terms of biological role, essential component of the volume-regulated anion channel (VRAC, also named VSOAC channel), an anion channel required to maintain a constant cell volume in response to extracellular or intracellular osmotic changes. The VRAC channel conducts iodide better than chloride and can also conduct organic osmolytes like taurine. Mediates efflux of amino acids, such as aspartate and glutamate, in response to osmotic stress. In complex with LRRC8C or LRRC8E, acts as a transporter of immunoreactive cyclic dinucleotide GMP-AMP (2'-3'-cGAMP), an immune messenger produced in response to DNA virus in the cytosol: mediates both import and export of 2'-3'-cGAMP, thereby promoting transfer of 2'-3'-cGAMP to bystander cells. In contrast, complexes containing LRRC8D inhibit transport of 2'-3'-cGAMP. Required for in vivo channel activity, together with at least one other family member (LRRC8B, LRRC8C, LRRC8D or LRRC8E); channel characteristics depend on the precise subunit composition. Can form functional channels by itself (in vitro). Involved in B-cell development: required for the pro-B cell to pre-B cell transition. Also required for T-cell development. Required for myoblast differentiation: VRAC activity promotes membrane hyperpolarization and regulates insulin-stimulated glucose metabolism and oxygen consumption. Also acts as a regulator of glucose-sensing in pancreatic beta cells: VRAC currents, generated in response to hypotonicity- or glucose-induced beta cell swelling, depolarize cells, thereby causing electrical excitation, leading to increase glucose sensitivity and insulin secretion. Also plays a role in lysosome homeostasis by forming functional lysosomal VRAC channels in response to low cytoplasmic ionic strength condition: lysosomal VRAC channels are necessary for the formation of large lysosome-derived vacuoles, which store and then expel excess water to maintain cytosolic water homeostasis. Acts as a key factor in NLRP3 inflammasome activation by modulating itaconate efflux and mitochondria function. The protein is Volume-regulated anion channel subunit LRRC8A of Rattus norvegicus (Rat).